Reading from the N-terminus, the 491-residue chain is Ribonuclease Y (491 aa).

Residues Leu-4–Ile-24 form a helical membrane-spanning segment. One can recognise a KH domain in the interval Val-181–Asp-247. An HD domain is found at Val-307–Gly-400.

This sequence belongs to the RNase Y family.

It localises to the cell membrane. Functionally, endoribonuclease that initiates mRNA decay. In Acidothermus cellulolyticus (strain ATCC 43068 / DSM 8971 / 11B), this protein is Ribonuclease Y.